The following is a 430-amino-acid chain: MSSIVAIKGFNDVLPTQTAAWRRLEQHLASLMDAYGYQQIRLPIVEQTGLFKRAIGDATDIVEKEMYTFFDKGNPPESLTLRPEGTAGCVRALVEHNLLRGATPRVWYMGPMFRYEKPQKGRYRQFHQFGVETFGVATPDIDAELIMLTARLWKRMGVDHMVQLELNTLGETDERTEYRNALVAFLNEHKDALDEDSQRRLTTNPLRILDSKIESTQKILENAPKLHDFLKEDSLSHFQQLQDYLTAAGIKFVINQKLVRGLDYYNKTVFEWTTTALGSQGTVCAGGRYDGLVGQLKGKADQSVPAVGFAMGMERLLLLLEQVEQAEIVRHCEAFLVAEPAYQSKALVLAEQLRDQLEAANSNIRIKTGSQSSMKSQMKKADQAGAVYAIILGEREWEAQQLAVKELATAEQSQVALAELVPFLIEKFTK.

The protein belongs to the class-II aminoacyl-tRNA synthetase family. Homodimer.

Its subcellular location is the cytoplasm. It catalyses the reaction tRNA(His) + L-histidine + ATP = L-histidyl-tRNA(His) + AMP + diphosphate + H(+). The protein is Histidine--tRNA ligase of Acinetobacter baumannii (strain SDF).